The following is a 209-amino-acid chain: Protein bli-3 (209 aa).

Positions 1 to 11 (MSGQGFSNADT) are enriched in polar residues. The disordered stretch occupies residues 1 to 24 (MSGQGFSNADTGNKPADPYKQANL).

This chain is Protein bli-3 (bli-3), found in Neurospora crassa (strain ATCC 24698 / 74-OR23-1A / CBS 708.71 / DSM 1257 / FGSC 987).